The primary structure comprises 307 residues: Acetaldehyde dehydrogenase 1 (307 aa).

The Acyl-thioester intermediate role is filled by C132. NAD(+) is bound by residues S163–N171 and N274.

Belongs to the acetaldehyde dehydrogenase family.

The catalysed reaction is acetaldehyde + NAD(+) + CoA = acetyl-CoA + NADH + H(+). The polypeptide is Acetaldehyde dehydrogenase 1 (tesF) (Comamonas testosteroni (Pseudomonas testosteroni)).